The chain runs to 557 residues: Formate--tetrahydrofolate ligase 2 (557 aa).

66–73 (TPAGEGKT) lines the ATP pocket.

Belongs to the formate--tetrahydrofolate ligase family.

It catalyses the reaction (6S)-5,6,7,8-tetrahydrofolate + formate + ATP = (6R)-10-formyltetrahydrofolate + ADP + phosphate. It functions in the pathway one-carbon metabolism; tetrahydrofolate interconversion. This chain is Formate--tetrahydrofolate ligase 2, found in Streptococcus pyogenes serotype M5 (strain Manfredo).